We begin with the raw amino-acid sequence, 593 residues long: tRNA (guanine(26)-N(2))-dimethyltransferase 1 (593 aa).

Residues 9-465 (TVIKEGEAEV…APMEIIWDIM (457 aa)) enclose the Trm1 methyltransferase domain. An S-adenosyl-L-methionine-binding site is contributed by Arg-36. The segment at 56–118 (AMLSKRARSS…KTAYESARRE (63 aa)) is disordered. Basic and acidic residues-rich tracts occupy residues 68–81 (VVEK…KEET) and 88–118 (DNGK…ARRE). Residues Arg-134, Asp-152, and Val-185 each coordinate S-adenosyl-L-methionine. Positions 315, 318, 350, and 353 each coordinate Zn(2+). Residues 546 to 593 (VNGHLNNNHKEAGDEEEEEEEEEPEEDIIEGEPELKRQKTTEDFASTS) are disordered. Positions 558–577 (GDEEEEEEEEEPEEDIIEGE) are enriched in acidic residues. The segment covering 578 to 587 (PELKRQKTTE) has biased composition (basic and acidic residues).

The protein belongs to the class I-like SAM-binding methyltransferase superfamily. Trm1 family.

The catalysed reaction is guanosine(26) in tRNA + 2 S-adenosyl-L-methionine = N(2)-dimethylguanosine(26) in tRNA + 2 S-adenosyl-L-homocysteine + 2 H(+). Dimethylates a single guanine residue at position 26 of most tRNAs using S-adenosyl-L-methionine as donor of the methyl groups. This Arabidopsis thaliana (Mouse-ear cress) protein is tRNA (guanine(26)-N(2))-dimethyltransferase 1.